The sequence spans 253 residues: 4-phosphopantoate--beta-alanine ligase (253 aa).

ATP-binding positions include R17, R39, 179 to 181, 185 to 186, and 197 to 198; these read DLN, RT, and NL.

The protein belongs to the archaeal phosphopantothenate synthetase family. As to quaternary structure, homodimer.

The enzyme catalyses (R)-4-phosphopantoate + beta-alanine + ATP = (R)-4'-phosphopantothenate + AMP + diphosphate + H(+). Its pathway is cofactor biosynthesis; coenzyme A biosynthesis. Functionally, catalyzes the condensation of (R)-4-phosphopantoate and beta-alanine to 4'-phosphopantothenate in the CoA biosynthesis pathway. This Methanosarcina mazei (strain ATCC BAA-159 / DSM 3647 / Goe1 / Go1 / JCM 11833 / OCM 88) (Methanosarcina frisia) protein is 4-phosphopantoate--beta-alanine ligase.